We begin with the raw amino-acid sequence, 397 residues long: Argininosuccinate synthase (397 aa).

8-16 serves as a coordination point for ATP; that stretch reads AYSGGLDTS. 2 residues coordinate L-citrulline: Tyr-86 and Ser-91. ATP is bound at residue Gly-116. L-aspartate-binding residues include Thr-118, Asn-122, and Asp-123. Residue Asn-122 participates in L-citrulline binding. Arg-126, Ser-175, Ser-184, Glu-260, and Tyr-272 together coordinate L-citrulline.

Belongs to the argininosuccinate synthase family. Type 1 subfamily. In terms of assembly, homotetramer.

Its subcellular location is the cytoplasm. The enzyme catalyses L-citrulline + L-aspartate + ATP = 2-(N(omega)-L-arginino)succinate + AMP + diphosphate + H(+). The protein operates within amino-acid biosynthesis; L-arginine biosynthesis; L-arginine from L-ornithine and carbamoyl phosphate: step 2/3. The sequence is that of Argininosuccinate synthase from Clostridium botulinum (strain 657 / Type Ba4).